Consider the following 62-residue polypeptide: Large ribosomal subunit protein bL28 (62 aa).

It belongs to the bacterial ribosomal protein bL28 family.

This is Large ribosomal subunit protein bL28 from Frankia casuarinae (strain DSM 45818 / CECT 9043 / HFP020203 / CcI3).